A 439-amino-acid chain; its full sequence is uncharacterized protein (439 aa).

3 disordered regions span residues 1-36, 126-157, and 411-439; these read MRPG…SKQA, SRTG…GVPI, and FRSD…AVPR.

This is an uncharacterized protein from Streptomyces fradiae (Streptomyces roseoflavus).